A 257-amino-acid chain; its full sequence is Ribosome-recycling factor, mitochondrial (257 aa).

This sequence belongs to the RRF family.

It localises to the mitochondrion. Its function is as follows. Necessary for protein synthesis in mitochondria. Functions as a ribosome recycling factor in mitochondria. This chain is Ribosome-recycling factor, mitochondrial (RRF1), found in Debaryomyces hansenii (strain ATCC 36239 / CBS 767 / BCRC 21394 / JCM 1990 / NBRC 0083 / IGC 2968) (Yeast).